Consider the following 195-residue polypeptide: Imidazoleglycerol-phosphate dehydratase (195 aa).

The protein belongs to the imidazoleglycerol-phosphate dehydratase family.

The protein localises to the cytoplasm. The enzyme catalyses D-erythro-1-(imidazol-4-yl)glycerol 3-phosphate = 3-(imidazol-4-yl)-2-oxopropyl phosphate + H2O. Its pathway is amino-acid biosynthesis; L-histidine biosynthesis; L-histidine from 5-phospho-alpha-D-ribose 1-diphosphate: step 6/9. The sequence is that of Imidazoleglycerol-phosphate dehydratase from Desulfosudis oleivorans (strain DSM 6200 / JCM 39069 / Hxd3) (Desulfococcus oleovorans).